Here is a 109-residue protein sequence, read N- to C-terminus: uncharacterized protein (109 aa).

Residues 87 to 106 (WCSVGTAAAVGIFIGALLSM) traverse the membrane as a helical segment.

This sequence belongs to the ElaB/YgaM/YqjD family. As to quaternary structure, may bind to ribosomes.

Its subcellular location is the cell inner membrane. This is an uncharacterized protein from Escherichia coli O157:H7.